Here is a 644-residue protein sequence, read N- to C-terminus: 3D-(3,5/4)-trihydroxycyclohexane-1,2-dione hydrolase (644 aa).

Residue Glu-65 coordinates thiamine diphosphate. A thiamine pyrophosphate binding region spans residues 442–522 (SLPGDLHKVW…INILLFDNAG (81 aa)). The Mg(2+) site is built by Asp-493 and Asn-520.

Belongs to the TPP enzyme family. The cofactor is Mg(2+). It depends on thiamine diphosphate as a cofactor.

It catalyses the reaction 3D-3,5/4-trihydroxycyclohexane-1,2-dione + H2O = 5-deoxy-D-glucuronate + H(+). It participates in polyol metabolism; myo-inositol degradation into acetyl-CoA; acetyl-CoA from myo-inositol: step 3/7. In terms of biological role, involved in the cleavage of the C1-C2 bond of 3D-(3,5/4)-trihydroxycyclohexane-1,2-dione (THcHDO) to yield 5-deoxy-glucuronate (5DG). This Clostridium tetani (strain Massachusetts / E88) protein is 3D-(3,5/4)-trihydroxycyclohexane-1,2-dione hydrolase.